The sequence spans 198 residues: Single-stranded DNA cytosine deaminase (198 aa).

The Bipartite nuclear localization signal signature appears at 1–30 (MDSLLMNRRKFLYQFKNVRWAKGRRETYLC). Positions 2–26 (DSLLMNRRKFLYQFKNVRWAKGRRE) are interaction with SUPT6H. Residues 23–129 (GRRETYLCYV…KAEPEGLRRL (107 aa)) form the CMP/dCMP-type deaminase domain. Position 27 is a phosphothreonine; by PKA (threonine 27). Position 38 is a phosphoserine; by PKA (serine 38). Positions 39 to 42 (ATSF) are important for interaction with CTNNBL1. Residue histidine 56 coordinates Zn(2+). Residue glutamate 58 is the Proton donor of the active site. Residues cysteine 87 and cysteine 90 each coordinate Zn(2+). Residues 88-116 (YDCARHVADFLRGNPNLSLRIFTARLYFC) form a required for interaction with RNF126 region. The Nuclear export signal motif lies at 183–198 (LYEVDDLRDAFRTLGL).

The protein belongs to the cytidine and deoxycytidylate deaminase family. As to quaternary structure, interacts with CTNNBL1; the interaction is important for the immunoglobulin switch activity of AICDA. Interacts (via its NLS) with KPNA1. Interacts with PKA/PRKACA and PRKAR1A/PKR1. Interacts with TRIM28 and NCL. Interacts with SUPT6H. Interacts with RNF126. Directly interacts with MCM3AP; this interaction may favor AICDA recruitment to immunoglobulin variable region genes, hence promoting somatic hypermutations. It depends on Zn(2+) as a cofactor. Post-translationally, ser-38 is the major site whereas Thr-27 is the minor site of phosphorylation. Phosphorylation regulates its class-switch recombination activity. In terms of processing, probably monoubiquitinated on several residues by RNF126. In terms of tissue distribution, strongly expressed in lymph nodes and tonsils.

It is found in the nucleus. The protein localises to the cytoplasm. Its subcellular location is the cytosol. It carries out the reaction a 2'-deoxycytidine in single-stranded DNA + H2O + H(+) = a 2'-deoxyuridine in single-stranded DNA + NH4(+). Single-stranded DNA-specific cytidine deaminase. Involved in somatic hypermutation (SHM), gene conversion, and class-switch recombination (CSR) in B-lymphocytes by deaminating C to U during transcription of Ig-variable (V) and Ig-switch (S) region DNA. Required for several crucial steps of B-cell terminal differentiation necessary for efficient antibody responses. May also play a role in the epigenetic regulation of gene expression by participating in DNA demethylation. This chain is Single-stranded DNA cytosine deaminase (AICDA), found in Homo sapiens (Human).